We begin with the raw amino-acid sequence, 411 residues long: Secretion apparatus protein BsaZ (411 aa).

4 helical membrane passes run 28-48, 80-100, 137-157, and 175-195; these read IVALIVIATGALAAPALVDLT, IAAPFVLLCAAAGALPSLVQS, ALLYVGVFALTVRVFADLYHA, and IVLTVRLVLLFLLCALPVLIL. The disordered stretch occupies residues 341 to 411; the sequence is AANRGGPPPE…APARTGDQNA (71 aa). Low complexity predominate over residues 370–404; sequence DACADNAFPDDAPPGAAAPNAGSPDGPAPDGGAPA.

It belongs to the type III secretion exporter family.

The protein resides in the cell membrane. In terms of biological role, part of the bsa type III secretion system, is involved in the intracellular replication of invading bacteria inside the host cell. Probably necessary for the lysis of the vacuole membrane and escape into the host cell cytoplasm. This is Secretion apparatus protein BsaZ (bsaZ) from Burkholderia pseudomallei (strain K96243).